A 669-amino-acid chain; its full sequence is Polyamine deacetylase HDAC10 (669 aa).

Residues 1-323 form a histone deacetylase region; sequence MGTALVYHED…VCMTVQTLLG (323 aa). Asp20 serves as a coordination point for substrate. Positions 21 to 24 match the Substrate specificity motif; sequence PECE. His135 serves as the catalytic Proton donor/acceptor. Zn(2+)-binding residues include Asp172, His174, and Asp265. Tyr305 contributes to the substrate binding site. Residues 361–373 show a composition bias toward polar residues; the sequence is DVTAVPMSPSSHS. A disordered region spans residues 361–387; it reads DVTAVPMSPSSHSPEGRPPPLLPGGPV. Ser393 is subject to Phosphoserine.

It belongs to the histone deacetylase family. HD type 2 subfamily. As to quaternary structure, interacts with HDAC3. Interacts with HDAC2 and NCOR2/SMRT. Interacts with HSPA8/HSC70. Interacts with MSH2. As to expression, widely expressed with high levels in liver and kidney.

The protein localises to the cytoplasm. Its subcellular location is the nucleus. The catalysed reaction is N(8)-acetylspermidine + H2O = spermidine + acetate. It catalyses the reaction N-acetylputrescine + H2O = putrescine + acetate. The enzyme catalyses N-acetylcadaverine + H2O = cadaverine + acetate. It carries out the reaction N(6)-acetyl-L-lysyl-[protein] + H2O = L-lysyl-[protein] + acetate. Its function is as follows. Polyamine deacetylase (PDAC), which acts preferentially on N(8)-acetylspermidine, and also on acetylcadaverine and acetylputrescine. Exhibits attenuated catalytic activity toward N(1),N(8)-diacetylspermidine and very low activity, if any, toward N(1)-acetylspermidine. Histone deacetylase activity has been observed in vitro. Has also been shown to be involved in MSH2 deacetylation. The physiological relevance of protein/histone deacetylase activity is unclear and could be very weak. May play a role in the promotion of late stages of autophagy, possibly autophagosome-lysosome fusion and/or lysosomal exocytosis in neuroblastoma cells. May play a role in homologous recombination. May promote DNA mismatch repair. This chain is Polyamine deacetylase HDAC10 (HDAC10), found in Homo sapiens (Human).